The chain runs to 1101 residues: Selenocysteine insertion sequence-binding protein 2-like (1101 aa).

5 disordered regions span residues 154 to 206 (LGQV…AGPD), 240 to 295 (LWKS…PDSG), 320 to 387 (QKKP…SESL), 884 to 1010 (TSDG…ISVE), and 1030 to 1101 (TLQL…TQTT). The segment covering 255 to 265 (AESSSEQGASE) has biased composition (low complexity). Residue serine 276 is modified to Phosphoserine. A compositionally biased stretch (polar residues) spans 327–346 (KNQTFSRGGRQTEQRNNSQV). 2 stretches are compositionally biased toward basic and acidic residues: residues 356 to 371 (SSER…DNKH) and 892 to 908 (ENEK…EKPS). A compositionally biased stretch (low complexity) spans 925–939 (ATGSTTSATSAGKST). Residues 940 to 950 (ASDKEEVKPDD) show a composition bias toward basic and acidic residues. A compositionally biased stretch (polar residues) spans 954–964 (ASQQSTETGSL). Residues 988–1002 (LEEEEDEDEEEEEDY) show a composition bias toward acidic residues. Residues 1030 to 1039 (TLQLGKTLNG) are compositionally biased toward polar residues. A compositionally biased stretch (acidic residues) spans 1040-1057 (SEEDNVEQSGEEEAEAPE). Positions 1070-1087 (ADQQASPGQQKSSNCSSL) are enriched in polar residues.

Its function is as follows. Binds SECIS (Sec insertion sequence) elements present on selenocysteine (Sec) protein mRNAs, but does not promote Sec incorporation into selenoproteins in vitro. This Homo sapiens (Human) protein is Selenocysteine insertion sequence-binding protein 2-like (SECISBP2L).